Consider the following 195-residue polypeptide: ATP-dependent Clp protease proteolytic subunit (195 aa).

Ser98 acts as the Nucleophile in catalysis. His123 is a catalytic residue.

The protein belongs to the peptidase S14 family. As to quaternary structure, fourteen ClpP subunits assemble into 2 heptameric rings which stack back to back to give a disk-like structure with a central cavity, resembling the structure of eukaryotic proteasomes.

The protein resides in the cytoplasm. It catalyses the reaction Hydrolysis of proteins to small peptides in the presence of ATP and magnesium. alpha-casein is the usual test substrate. In the absence of ATP, only oligopeptides shorter than five residues are hydrolyzed (such as succinyl-Leu-Tyr-|-NHMec, and Leu-Tyr-Leu-|-Tyr-Trp, in which cleavage of the -Tyr-|-Leu- and -Tyr-|-Trp bonds also occurs).. Its function is as follows. Cleaves peptides in various proteins in a process that requires ATP hydrolysis. Has a chymotrypsin-like activity. Plays a major role in the degradation of misfolded proteins. This is ATP-dependent Clp protease proteolytic subunit from Helicobacter pylori (strain G27).